The chain runs to 549 residues: Hydroxylamine reductase (549 aa).

[4Fe-4S] cluster-binding residues include cysteine 5, cysteine 8, cysteine 17, and cysteine 23. 8 residues coordinate hybrid [4Fe-2O-2S] cluster: histidine 244, glutamate 268, cysteine 312, cysteine 403, cysteine 431, cysteine 456, glutamate 491, and lysine 493. A Cysteine persulfide modification is found at cysteine 403.

It belongs to the HCP family. [4Fe-4S] cluster serves as cofactor. It depends on hybrid [4Fe-2O-2S] cluster as a cofactor.

It localises to the cytoplasm. It carries out the reaction A + NH4(+) + H2O = hydroxylamine + AH2 + H(+). Catalyzes the reduction of hydroxylamine to form NH(3) and H(2)O. This Clostridium perfringens (strain 13 / Type A) protein is Hydroxylamine reductase.